Here is a 208-residue protein sequence, read N- to C-terminus: Glutathione S-transferase 1-1 (208 aa).

The GST N-terminal domain occupies 1 to 80 (MDFYYLPGSA…YLVEKYGKND (80 aa)). Residues S9, 50-52 (HTI), and 64-66 (ESR) each bind glutathione. A GST C-terminal domain is found at 86–207 (CPKKRAVINQ…EGCLEFKKFF (122 aa)).

It belongs to the GST superfamily. Theta family. In terms of assembly, homodimer.

It carries out the reaction RX + glutathione = an S-substituted glutathione + a halide anion + H(+). Conjugation of reduced glutathione to a wide number of exogenous and endogenous hydrophobic electrophiles. This is Glutathione S-transferase 1-1 (GST1) from Lucilia cuprina (Green bottle fly).